The primary structure comprises 365 residues: Histidinol-phosphate aminotransferase (365 aa).

The residue at position 223 (Lys223) is an N6-(pyridoxal phosphate)lysine.

The protein belongs to the class-II pyridoxal-phosphate-dependent aminotransferase family. Histidinol-phosphate aminotransferase subfamily. As to quaternary structure, homodimer. Pyridoxal 5'-phosphate is required as a cofactor.

It catalyses the reaction L-histidinol phosphate + 2-oxoglutarate = 3-(imidazol-4-yl)-2-oxopropyl phosphate + L-glutamate. The protein operates within amino-acid biosynthesis; L-histidine biosynthesis; L-histidine from 5-phospho-alpha-D-ribose 1-diphosphate: step 7/9. In Brucella abortus (strain 2308), this protein is Histidinol-phosphate aminotransferase.